The chain runs to 403 residues: Chalcone synthase 2 (403 aa).

59–66 (RFQRMCES) is a binding site for CoA. Cys-168 functions as the Acyl-thioester intermediate in the catalytic mechanism. Substrate is bound at residue 220 to 221 (GD). Ala-313 is a binding site for CoA.

Belongs to the thiolase-like superfamily. Chalcone/stilbene synthases family. Homodimer.

It carries out the reaction (E)-4-coumaroyl-CoA + 3 malonyl-CoA + 3 H(+) = 2',4,4',6'-tetrahydroxychalcone + 3 CO2 + 4 CoA. Its pathway is secondary metabolite biosynthesis; flavonoid biosynthesis. Its function is as follows. The primary product of this enzyme is 4,2',4',6'-tetrahydroxychalcone (also termed naringenin-chalcone or chalcone) which can under specific conditions spontaneously isomerize into naringenin. This is Chalcone synthase 2 (CHS2) from Oryza sativa subsp. japonica (Rice).